The primary structure comprises 214 residues: MKAFTQHIGLVAPLDRANVDTDQIIPKQFLKSIKRTGFGPNLFDEWRYLDVGQPYQDNSKRPLNQDFVLNHARYQGASVLLARENFGCGSSREHAPWALDEYGFRSVIAPSFADIFFNNSFKNGLLPIILDAAEVDELFKQVEATPGYQLTIDLEAQAVTRPDGKVLKFEIDAFRKHCLLNGLDDIGLTLQDSDAIKAFEGKHRASQPWLFRDA.

The protein belongs to the LeuD family. LeuD type 1 subfamily. In terms of assembly, heterodimer of LeuC and LeuD.

The enzyme catalyses (2R,3S)-3-isopropylmalate = (2S)-2-isopropylmalate. The protein operates within amino-acid biosynthesis; L-leucine biosynthesis; L-leucine from 3-methyl-2-oxobutanoate: step 2/4. Functionally, catalyzes the isomerization between 2-isopropylmalate and 3-isopropylmalate, via the formation of 2-isopropylmaleate. The sequence is that of 3-isopropylmalate dehydratase small subunit from Pseudomonas entomophila (strain L48).